The chain runs to 330 residues: DNA-directed RNA polymerase subunit alpha (330 aa).

Residues 1-231 are alpha N-terminal domain (alpha-NTD); the sequence is MALFNFQKPD…IHHFMLFSDE (231 aa). The segment at 253–330 is alpha C-terminal domain (alpha-CTD); that stretch reads MRQLLKTKLV…DLAKYKLDKE (78 aa).

It belongs to the RNA polymerase alpha chain family. In terms of assembly, homodimer. The RNAP catalytic core consists of 2 alpha, 1 beta, 1 beta' and 1 omega subunit. When a sigma factor is associated with the core the holoenzyme is formed, which can initiate transcription.

The enzyme catalyses RNA(n) + a ribonucleoside 5'-triphosphate = RNA(n+1) + diphosphate. Its function is as follows. DNA-dependent RNA polymerase catalyzes the transcription of DNA into RNA using the four ribonucleoside triphosphates as substrates. This chain is DNA-directed RNA polymerase subunit alpha, found in Flavobacterium psychrophilum (strain ATCC 49511 / DSM 21280 / CIP 103535 / JIP02/86).